Consider the following 701-residue polypeptide: Conserved oligomeric Golgi complex subunit 1 (701 aa).

The protein belongs to the COG1 family. Component of the conserved oligomeric Golgi (COG) complex which consists of eight different proteins cog1-cog8.

The protein resides in the cytoplasm. It is found in the nucleus. Its subcellular location is the golgi apparatus membrane. Acts as essential component of the peripheral membrane COG complex that is involved in intra-Golgi protein trafficking. COG is located at the cis-Golgi, and regulates tethering of retrograde intra-Golgi vesicles and possibly a number of other membrane trafficking events. The polypeptide is Conserved oligomeric Golgi complex subunit 1 (cog1) (Schizosaccharomyces pombe (strain 972 / ATCC 24843) (Fission yeast)).